Here is a 131-residue protein sequence, read N- to C-terminus: Large ribosomal subunit protein bL17 (131 aa).

It belongs to the bacterial ribosomal protein bL17 family. In terms of assembly, part of the 50S ribosomal subunit. Contacts protein L32.

In Vesicomyosocius okutanii subsp. Calyptogena okutanii (strain HA), this protein is Large ribosomal subunit protein bL17.